Reading from the N-terminus, the 435-residue chain is Trigger factor (435 aa).

Residues 161-246 enclose the PPIase FKBP-type domain; that stretch reads DDQVTLDFEG…LTKVEEQILP (86 aa).

The protein belongs to the FKBP-type PPIase family. Tig subfamily.

It localises to the cytoplasm. It carries out the reaction [protein]-peptidylproline (omega=180) = [protein]-peptidylproline (omega=0). Its function is as follows. Involved in protein export. Acts as a chaperone by maintaining the newly synthesized protein in an open conformation. Functions as a peptidyl-prolyl cis-trans isomerase. The sequence is that of Trigger factor from Psychromonas ingrahamii (strain DSM 17664 / CCUG 51855 / 37).